Consider the following 138-residue polypeptide: Glutathione S-transferase Mu 5 (138 aa).

S1 is modified (phosphoserine). The GST N-terminal domain occupies 1–71; sequence SMVLGYWDIR…KITQSNAILR (71 aa). Residues 6–7, 39–43, 52–53, and 65–66 contribute to the glutathione site; these read YW, WLDVK, NL, and QS. Positions 72-135 constitute a GST C-terminal domain; the sequence is IRVDIMENQI…FMCRCFKMPI (64 aa).

The protein belongs to the GST superfamily. Mu family. As to quaternary structure, homodimer.

Its subcellular location is the cytoplasm. It carries out the reaction RX + glutathione = an S-substituted glutathione + a halide anion + H(+). In terms of biological role, conjugation of reduced glutathione to a wide number of exogenous and endogenous hydrophobic electrophiles. The polypeptide is Glutathione S-transferase Mu 5 (Mesocricetus auratus (Golden hamster)).